The following is a 426-amino-acid chain: C4-dicarboxylate transport protein (426 aa).

Transmembrane regions (helical) follow at residues 8 to 28, 44 to 64, 78 to 98, 148 to 168, 184 to 204, 222 to 242, 297 to 317, and 355 to 375; these read VLYV…HFYP, LIKM…IAGM, LLYF…ATHL, GEIL…AHVG, ILFG…FGAM, LIGT…GFIA, GYSF…LFIA, and AATL…ILGI.

Belongs to the dicarboxylate/amino acid:cation symporter (DAACS) (TC 2.A.23) family.

It is found in the cell inner membrane. Functionally, responsible for the transport of dicarboxylates such as succinate, fumarate, and malate from the periplasm across the membrane. In Paraburkholderia phymatum (strain DSM 17167 / CIP 108236 / LMG 21445 / STM815) (Burkholderia phymatum), this protein is C4-dicarboxylate transport protein.